A 537-amino-acid chain; its full sequence is Beta-galactoside alpha-2,6-sialyltransferase 2 (537 aa).

Residues 1 to 10 (MKSWVRQGRR) are Cytoplasmic-facing. The chain crosses the membrane as a helical; Signal-anchor for type II membrane protein span at residues 11 to 31 (LVLVGMLAWVLLFLALLSYFL). Topologically, residues 32–537 (DARVNEPLTS…PGFSTVDCDI (506 aa)) are lumenal. Disordered regions lie at residues 83-117 (TRDEPRPSATPEFSLEASQSPDSAPLAIYGGPEGI) and 134-202 (GTEN…GDSS). The span at 134–145 (GTENIGSQSDPV) shows a compositional bias: polar residues. Acidic residues predominate over residues 166-185 (EEEEEEEEEEERQENEDEDV). Intrachain disulfides connect Cys265/Cys535, Cys312/Cys464, and Cys482/Cys493. Residues Asn353 and Asn373 are each glycosylated (N-linked (GlcNAc...) asparagine).

Belongs to the glycosyltransferase 29 family.

It is found in the golgi apparatus. Its subcellular location is the golgi stack membrane. It catalyses the reaction a beta-D-galactoside + CMP-N-acetyl-beta-neuraminate = an N-acetyl-alpha-neuraminyl-(2-&gt;6)-beta-D-galactosyl derivative + CMP + H(+). Its function is as follows. Transfers sialic acid from the donor of substrate CMP-sialic acid to galactose containing acceptor substrates. This Takifugu rubripes (Japanese pufferfish) protein is Beta-galactoside alpha-2,6-sialyltransferase 2 (st6gal2).